A 419-amino-acid chain; its full sequence is Tyrosine--tRNA ligase (419 aa).

An L-tyrosine-binding site is contributed by Tyr34. The 'HIGH' region motif lies at 39–48; that stretch reads PTADSLHLGN. Residues Tyr169 and Gln173 each contribute to the L-tyrosine site. A 'KMSKS' region motif is present at residues 229 to 233; it reads KFGKS. Residue Lys232 coordinates ATP. In terms of domain architecture, S4 RNA-binding spans 353–419; it reads LTLIELLISA…GKKKNFVLTY (67 aa).

Belongs to the class-I aminoacyl-tRNA synthetase family. TyrS type 1 subfamily. Homodimer.

Its subcellular location is the cytoplasm. The enzyme catalyses tRNA(Tyr) + L-tyrosine + ATP = L-tyrosyl-tRNA(Tyr) + AMP + diphosphate + H(+). Catalyzes the attachment of tyrosine to tRNA(Tyr) in a two-step reaction: tyrosine is first activated by ATP to form Tyr-AMP and then transferred to the acceptor end of tRNA(Tyr). The protein is Tyrosine--tRNA ligase of Lactococcus lactis subsp. cremoris (strain SK11).